Here is a 165-residue protein sequence, read N- to C-terminus: DELTA-actitoxin-Oor1a (165 aa).

Residues 1–17 are N-terminal region; the sequence is ATFRVLAKVLAELGKVS. 5 residues coordinate phosphocholine: Ser-41, Val-74, Ser-92, Pro-94, and Tyr-125. The tract at residues 92-107 is trp-rich region, which is important for the binding to lipid membrane; that stretch reads SVPYDYNLYSNWWNVK.

This sequence belongs to the actinoporin family. Sea anemone subfamily. In terms of assembly, octamer or nonamer in membranes. Monomer in the soluble state.

The protein localises to the secreted. It is found in the nematocyst. Its subcellular location is the target cell membrane. Its function is as follows. Pore-forming protein that forms cations-selective hydrophilic pores of around 1 nm and causes cardiac stimulation and cytolysis. Pore formation is a multi-step process that involves specific recognition of membrane sphingomyelin (but neither cholesterol nor phosphatidylcholine) using aromatic rich region and adjacent phosphocholine (POC) binding site, firm binding to the membrane (mainly driven by hydrophobic interactions) accompanied by the transfer of the N-terminal region to the lipid-water interface and finally pore formation after oligomerization of monomers. Cytolytic effects include red blood cells hemolysis, platelet aggregation and lysis, cytotoxic and cytostatic effects on fibroblasts. Lethality in mammals has been ascribed to severe vasospasm of coronary vessels, cardiac arrhythmia, and inotropic effects. In Oulactis orientalis (Japan anemone), this protein is DELTA-actitoxin-Oor1a.